The sequence spans 257 residues: Zinc transporter ZupT (257 aa).

The next 3 membrane-spanning stretches (helical) occupy residues 5–25, 32–52, and 61–81; these read LILT…GVLG, LLAF…LMEM, and GMSP…YFGL. Residues asparagine 120 and glutamate 123 each contribute to the Fe(2+) site. Zn(2+) is bound by residues glutamate 123 and histidine 148. The next 4 membrane-spanning stretches (helical) occupy residues 137-157, 171-191, 195-215, and 236-256; these read LGFG…LAVA, ILWA…AWLI, MISP…MVAL, and GVLC…TAGI. Residues asparagine 149, glutamate 152, and glutamate 181 each coordinate Fe(2+). Zn(2+) is bound at residue glutamate 152.

It belongs to the ZIP transporter (TC 2.A.5) family. ZupT subfamily.

The protein localises to the cell inner membrane. The catalysed reaction is Zn(2+)(in) = Zn(2+)(out). Functionally, mediates zinc uptake. May also transport other divalent cations. This Escherichia coli O7:K1 (strain IAI39 / ExPEC) protein is Zinc transporter ZupT.